The primary structure comprises 113 residues: Putative single-stranded DNA-binding protein ycf41 (113 aa).

Positions 1-101 constitute an SSB domain; sequence MNYASFIIKI…EVSGFKIYPF (101 aa).

The protein localises to the plastid. It is found in the chloroplast. This chain is Putative single-stranded DNA-binding protein ycf41 (ycf41), found in Trieres chinensis (Marine centric diatom).